The chain runs to 525 residues: Peptide chain release factor 3 (525 aa).

A tr-type G domain is found at A8 to Q276. GTP-binding positions include S17–T24, D85–H89, and N139–D142.

This sequence belongs to the TRAFAC class translation factor GTPase superfamily. Classic translation factor GTPase family. PrfC subfamily.

It localises to the cytoplasm. Functionally, increases the formation of ribosomal termination complexes and stimulates activities of RF-1 and RF-2. It binds guanine nucleotides and has strong preference for UGA stop codons. It may interact directly with the ribosome. The stimulation of RF-1 and RF-2 is significantly reduced by GTP and GDP, but not by GMP. This is Peptide chain release factor 3 from Coxiella burnetii (strain CbuK_Q154) (Coxiella burnetii (strain Q154)).